We begin with the raw amino-acid sequence, 137 residues long: Holo-[acyl-carrier-protein] synthase (137 aa).

Residues Asp8 and Glu57 each coordinate Mg(2+).

The protein belongs to the P-Pant transferase superfamily. AcpS family. It depends on Mg(2+) as a cofactor.

The protein resides in the cytoplasm. It catalyses the reaction apo-[ACP] + CoA = holo-[ACP] + adenosine 3',5'-bisphosphate + H(+). Its function is as follows. Transfers the 4'-phosphopantetheine moiety from coenzyme A to a Ser of acyl-carrier-protein. The sequence is that of Holo-[acyl-carrier-protein] synthase from Cereibacter sphaeroides (strain ATCC 17023 / DSM 158 / JCM 6121 / CCUG 31486 / LMG 2827 / NBRC 12203 / NCIMB 8253 / ATH 2.4.1.) (Rhodobacter sphaeroides).